Consider the following 1196-residue polypeptide: Jouberin (1196 aa).

Positions 13–45 (KVRFEELLKTHSDLMREKKKLKKKLVRSEENIS) form a coiled coil. Residue serine 45 is modified to Phosphoserine. Disordered stretches follow at residues 56 to 186 (MKET…EEDE), 215 to 242 (QLTY…KEVP), and 254 to 327 (ISGD…HEIT). A compositionally biased stretch (polar residues) spans 80–91 (DDVSAANTNNLK). Basic residues predominate over residues 92–101 (KSTRVTKNKL). Polar residues predominate over residues 102–113 (RNTQLATENPNG). Basic and acidic residues-rich tracts occupy residues 141–154 (LKPE…DSTH), 166–179 (DHQK…GREE), and 224–233 (LFHDDKLSSE). The interval 141–434 (LKPETPENKV…VFNENFPYLL (294 aa)) is interaction with HAP1. Over residues 300-309 (KPKKTKKKTK) the composition is skewed to basic residues. 7 WD repeats span residues 607–649 (AGER…FMRE), 652–691 (GHLN…TNTF), 695–735 (PHPS…DSAI), 742–781 (VHKS…NDLE), 797–837 (EFKG…ARKF), 841–880 (ANYR…QVAM), and 885–926 (PFKS…AQQE). Serine 1002 is modified (phosphoserine). One can recognise an SH3 domain in the interval 1051 to 1111 (DTAPTVVALY…PANHVASETL (61 aa)). The interval 1115 to 1196 (LPPEIKERSP…QAGRKVTLIE (82 aa)) is disordered. 2 stretches are compositionally biased toward basic and acidic residues: residues 1117–1136 (PEIK…KIEK) and 1161–1182 (THSE…DTRM). Serine 1123 carries the post-translational modification Phosphoserine.

In terms of assembly, self-associates. Part of the tectonic-like complex (also named B9 complex). Interacts with MKS1. Interacts with NPHP1; probably as heterodimers and/or AHI1(2):NPHP1(2) heterotetramers. Interacts (via SH3 domain) with the dynamin GTPase DNM2. Interacts with HAP1; probably as AHI1(2):HAP1(2) heterotetramers. Interacts with RAB8A. Interacts with CEND1. Interacts with CTNNB1/beta-catenin. Interacts with SPATA7. Highly expressed in the most primitive normal hematopoietic cells. Expressed in brain, particularly in neurons that give rise to the crossing axons of the corticospinal tract and superior cerebellar peduncles. Expressed in kidney (renal collecting duct cells) (at protein level).

Its subcellular location is the cytoplasm. It localises to the cytoskeleton. The protein localises to the cilium basal body. It is found in the cell junction. The protein resides in the adherens junction. Its subcellular location is the microtubule organizing center. It localises to the centrosome. The protein localises to the centriole. In terms of biological role, involved in vesicle trafficking and required for ciliogenesis, formation of primary non-motile cilium, and recruitment of RAB8A to the basal body of primary cilium. Component of the tectonic-like complex, a complex localized at the transition zone of primary cilia and acting as a barrier that prevents diffusion of transmembrane proteins between the cilia and plasma membranes. Involved in neuronal differentiation. As a positive modulator of classical Wnt signaling, may play a crucial role in ciliary signaling during cerebellum embryonic development. The chain is Jouberin (AHI1) from Homo sapiens (Human).